We begin with the raw amino-acid sequence, 445 residues long: Guanosine nucleotide diphosphate dissociation inhibitor At5g09550 (445 aa).

This sequence belongs to the Rab GDI family.

Its function is as follows. Regulates the GDP/GTP exchange reaction of most RAB proteins by inhibiting the dissociation of GDP from them, and the subsequent binding of GTP. In Arabidopsis thaliana (Mouse-ear cress), this protein is Guanosine nucleotide diphosphate dissociation inhibitor At5g09550.